A 372-amino-acid polypeptide reads, in one-letter code: Cytochrome b (372 aa).

The next 4 helical transmembrane spans lie at 25 to 45 (FGSM…FLAV), 69 to 90 (WMMQ…YIHM), 105 to 125 (WLSG…GYVL), and 170 to 190 (FFAL…LHIM). The heme b site is built by His75 and His89. Heme b is bound by residues His174 and His188. His193 lines the a ubiquinone pocket. 4 helical membrane-spanning segments follow: residues 218-238 (YKDL…ISFL), 280-300 (LGGA…PFTH), 312-332 (FMQL…WTAT), and 339-358 (YTTI…MSNL).

The protein belongs to the cytochrome b family. As to quaternary structure, the cytochrome bc1 complex contains 3 respiratory subunits (MT-CYB, CYC1 and UQCRFS1), 2 core proteins (UQCRC1 and UQCRC2) and probably 6 low-molecular weight proteins. Requires heme b as cofactor.

It is found in the mitochondrion inner membrane. Functionally, component of the ubiquinol-cytochrome c reductase complex (complex III or cytochrome b-c1 complex) that is part of the mitochondrial respiratory chain. The b-c1 complex mediates electron transfer from ubiquinol to cytochrome c. Contributes to the generation of a proton gradient across the mitochondrial membrane that is then used for ATP synthesis. The sequence is that of Cytochrome b (MT-CYB) from Sanzinia madagascariensis (Madagascar tree boa).